The chain runs to 568 residues: Potassium-transporting ATPase potassium-binding subunit (568 aa).

A run of 10 helical transmembrane segments spans residues 1 to 21 (MWLT…LAVP), 60 to 80 (GLAL…LLRA), 129 to 149 (AITF…AGFI), 174 to 194 (VMLP…VPQA), 251 to 271 (IHIL…GSML), 278 to 298 (WVLF…VFTA), 381 to 401 (VGLI…GMMI), 420 to 440 (VMLA…LAAV), 488 to 508 (IGLA…ALAG), and 528 to 548 (PLFM…TFLP).

The protein belongs to the KdpA family. The system is composed of three essential subunits: KdpA, KdpB and KdpC.

It localises to the cell inner membrane. Functionally, part of the high-affinity ATP-driven potassium transport (or Kdp) system, which catalyzes the hydrolysis of ATP coupled with the electrogenic transport of potassium into the cytoplasm. This subunit binds the periplasmic potassium ions and delivers the ions to the membrane domain of KdpB through an intramembrane tunnel. The sequence is that of Potassium-transporting ATPase potassium-binding subunit from Delftia acidovorans (strain DSM 14801 / SPH-1).